Reading from the N-terminus, the 196-residue chain is Carnitine operon protein CaiE (196 aa).

Residues Q174–R196 are disordered. The segment covering Q187 to R196 has biased composition (polar residues).

Belongs to the transferase hexapeptide repeat family.

The protein operates within amine and polyamine metabolism; carnitine metabolism. In terms of biological role, overproduction of CaiE stimulates the activity of CaiB and CaiD. The polypeptide is Carnitine operon protein CaiE (caiE) (Escherichia coli (strain K12)).